The chain runs to 488 residues: Spermatogenesis-associated protein 6 (488 aa).

The signal sequence occupies residues 1 to 17; that stretch reads MPKVKALQCALALEIRS. The segment at 176–225 is disordered; it reads HGRLQCRTSRSQKKKSKSPERSKYCINTKNYEQPTISSKSHSPSPYTKRR. Positions 200-220 are enriched in polar residues; that stretch reads CINTKNYEQPTISSKSHSPSP. Ser-217 and Ser-219 each carry phosphoserine. A Glycyl lysine isopeptide (Lys-Gly) (interchain with G-Cter in SUMO2) cross-link involves residue Lys-248. Phosphoserine occurs at positions 265, 274, 325, 343, 346, 354, 424, 465, and 487.

It belongs to the SPATA6 family. Interacts with MYL6. As to expression, specifically expressed in developing spermatids and mature spermatozoa (at protein level). Isoform 1 is weakly expressed in testis, ovary, thymus and placenta. Isoform 2 and isoform 3 are testis-specific. Expression isw higher in spermatids than in spermatocytes and spermatogonia.

It localises to the secreted. It is found in the cell projection. The protein localises to the cilium. Its subcellular location is the flagellum. In terms of biological role, required for formation of the sperm connecting piece during spermiogenesis. Sperm connecting piece is essential for linking the developing flagellum to the head during late spermiogenesis. May be involved in myosin-based microfilament transport through interaction with myosin subunits. In Mus musculus (Mouse), this protein is Spermatogenesis-associated protein 6.